Here is a 378-residue protein sequence, read N- to C-terminus: Phosphatidyl-myo-inositol mannosyltransferase (378 aa).

The GDP-alpha-D-mannose site is built by tyrosine 9 and glycine 16. Residues glutamine 18, 62–63 (YN), and arginine 68 each bind a 1,2-diacyl-sn-glycero-3-phospho-(1D-myo-inositol). Residues arginine 196, 201–202 (RK), 251–253 (VDD), lysine 256, 274–278 (ESFGI), and glutamate 282 contribute to the GDP-alpha-D-mannose site.

This sequence belongs to the glycosyltransferase group 1 family. In terms of assembly, monomer. Mg(2+) is required as a cofactor.

The protein resides in the cell membrane. The enzyme catalyses a 1,2-diacyl-sn-glycero-3-phospho-(1D-myo-inositol) + GDP-alpha-D-mannose = a 1,2-diacyl-sn-glycero-3-phospho-[alpha-D-mannopyranosyl-(1&lt;-&gt;6)-D-myo-inositol] + GDP + H(+). Its pathway is phospholipid metabolism; phosphatidylinositol metabolism. Functionally, involved in the biosynthesis of phosphatidyl-myo-inositol mannosides (PIM) which are early precursors in the biosynthesis of lipomannans (LM) and lipoarabinomannans (LAM). Catalyzes the addition of a mannosyl residue from GDP-D-mannose (GDP-Man) to the position 2 of the carrier lipid phosphatidyl-myo-inositol (PI) to generate a phosphatidyl-myo-inositol bearing an alpha-1,2-linked mannose residue (PIM1). The sequence is that of Phosphatidyl-myo-inositol mannosyltransferase from Mycobacterium bovis (strain ATCC BAA-935 / AF2122/97).